Consider the following 309-residue polypeptide: UDP-N-acetylenolpyruvoylglucosamine reductase (309 aa).

In terms of domain architecture, FAD-binding PCMH-type spans 34-221 (RVGGPAQVLF…TAAREAAQPI (188 aa)). The active site involves Arg-179. Residue Ser-228 is the Proton donor of the active site. The active site involves Glu-298.

This sequence belongs to the MurB family. Requires FAD as cofactor.

It localises to the cytoplasm. The catalysed reaction is UDP-N-acetyl-alpha-D-muramate + NADP(+) = UDP-N-acetyl-3-O-(1-carboxyvinyl)-alpha-D-glucosamine + NADPH + H(+). It functions in the pathway cell wall biogenesis; peptidoglycan biosynthesis. In terms of biological role, cell wall formation. In Methylorubrum extorquens (strain CM4 / NCIMB 13688) (Methylobacterium extorquens), this protein is UDP-N-acetylenolpyruvoylglucosamine reductase.